Reading from the N-terminus, the 1058-residue chain is Carbamoyl phosphate synthase large chain (1058 aa).

The carboxyphosphate synthetic domain stretch occupies residues 1–401 (MPKRTDIQKI…SLLKACRSLE (401 aa)). Residues Arg129, Arg169, Gly175, Gly176, Arg208, Ile210, Glu215, Gly241, Ile242, His243, Gln284, and Glu298 each contribute to the ATP site. Residues 133-327 (KQLMEELEQP…IAKLAAKIAV (195 aa)) form the ATP-grasp 1 domain. Residues Gln284, Glu298, and Asn300 each coordinate Mg(2+). Mn(2+) contacts are provided by Gln284, Glu298, and Asn300. The segment at 402-546 (IGVHHNEIPE…YSTYGWENES (145 aa)) is oligomerization domain. The tract at residues 547 to 929 (IKSDKESVLV…ALYKAFEASY (383 aa)) is carbamoyl phosphate synthetic domain. Residues 671 to 861 (EQALKELDIP…MAQVATKLIL (191 aa)) form the ATP-grasp 2 domain. ATP-binding residues include Arg707, Ser746, Ile748, Glu752, Gly777, Val778, His779, Ser780, Gln820, and Glu832. Mg(2+) contacts are provided by Gln820, Glu832, and Asn834. The Mn(2+) site is built by Gln820, Glu832, and Asn834. The MGS-like domain maps to 930–1058 (LHLPTFGNVV…ESRSFVTEAI (129 aa)). An allosteric domain region spans residues 930-1058 (LHLPTFGNVV…ESRSFVTEAI (129 aa)).

Belongs to the CarB family. In terms of assembly, composed of two chains; the small (or glutamine) chain promotes the hydrolysis of glutamine to ammonia, which is used by the large (or ammonia) chain to synthesize carbamoyl phosphate. Tetramer of heterodimers (alpha,beta)4. Mg(2+) is required as a cofactor. The cofactor is Mn(2+).

The catalysed reaction is hydrogencarbonate + L-glutamine + 2 ATP + H2O = carbamoyl phosphate + L-glutamate + 2 ADP + phosphate + 2 H(+). The enzyme catalyses hydrogencarbonate + NH4(+) + 2 ATP = carbamoyl phosphate + 2 ADP + phosphate + 2 H(+). Its pathway is amino-acid biosynthesis; L-arginine biosynthesis; carbamoyl phosphate from bicarbonate: step 1/1. It functions in the pathway pyrimidine metabolism; UMP biosynthesis via de novo pathway; (S)-dihydroorotate from bicarbonate: step 1/3. In terms of biological role, large subunit of the glutamine-dependent carbamoyl phosphate synthetase (CPSase). CPSase catalyzes the formation of carbamoyl phosphate from the ammonia moiety of glutamine, carbonate, and phosphate donated by ATP, constituting the first step of 2 biosynthetic pathways, one leading to arginine and/or urea and the other to pyrimidine nucleotides. The large subunit (synthetase) binds the substrates ammonia (free or transferred from glutamine from the small subunit), hydrogencarbonate and ATP and carries out an ATP-coupled ligase reaction, activating hydrogencarbonate by forming carboxy phosphate which reacts with ammonia to form carbamoyl phosphate. In Streptococcus pneumoniae (strain ATCC 700669 / Spain 23F-1), this protein is Carbamoyl phosphate synthase large chain.